The sequence spans 295 residues: Indole-3-glycerol phosphate synthase (295 aa).

Belongs to the TrpC family.

It catalyses the reaction 1-(2-carboxyphenylamino)-1-deoxy-D-ribulose 5-phosphate + H(+) = (1S,2R)-1-C-(indol-3-yl)glycerol 3-phosphate + CO2 + H2O. It participates in amino-acid biosynthesis; L-tryptophan biosynthesis; L-tryptophan from chorismate: step 4/5. In Prochlorococcus marinus (strain MIT 9515), this protein is Indole-3-glycerol phosphate synthase.